A 148-amino-acid polypeptide reads, in one-letter code: FAD synthase (148 aa).

ATP-binding positions include V14 to F15, H19 to H22, and D100.

It belongs to the archaeal FAD synthase family. As to quaternary structure, homodimer. A divalent metal cation serves as cofactor.

It carries out the reaction FMN + ATP + H(+) = FAD + diphosphate. It functions in the pathway cofactor biosynthesis; FAD biosynthesis; FAD from FMN: step 1/1. Functionally, catalyzes the transfer of the AMP portion of ATP to flavin mononucleotide (FMN) to produce flavin adenine dinucleotide (FAD) coenzyme. The chain is FAD synthase from Pyrococcus abyssi (strain GE5 / Orsay).